A 108-amino-acid chain; its full sequence is Anti-sigma-B factor antagonist (108 aa).

The STAS domain occupies 3–108 (LNIETTTQDK…MHVNEGTEVE (106 aa)). Residue Ser57 is modified to Phosphoserine.

Belongs to the anti-sigma-factor antagonist family. In terms of processing, phosphorylated by RsbW on a serine residue.

In terms of biological role, positive regulator of sigma-B activity. Non-phosphorylated RsbV binds to RsbW, preventing its association with sigma-B. When phosphorylated, releases RsbW, which is then free to complex with and inactivate sigma-B. This chain is Anti-sigma-B factor antagonist (rsbV), found in Staphylococcus aureus (strain NCTC 8325 / PS 47).